An 898-amino-acid polypeptide reads, in one-letter code: DNA gyrase subunit A (898 aa).

Disordered stretches follow at residues 1–22 and 36–56; these read MSDD…DDDS and EEEK…EKEG. The region spanning 97–562 is the Topo IIA-type catalytic domain; the sequence is LPDARDGLKP…VMSSINNEDL (466 aa). Catalysis depends on tyrosine 185, which acts as the O-(5'-phospho-DNA)-tyrosine intermediate. The GyrA-box signature appears at 589 to 595; sequence QRRGGVG.

The protein belongs to the type II topoisomerase GyrA/ParC subunit family. In terms of assembly, heterotetramer, composed of two GyrA and two GyrB chains. In the heterotetramer, GyrA contains the active site tyrosine that forms a transient covalent intermediate with DNA, while GyrB binds cofactors and catalyzes ATP hydrolysis.

The protein resides in the cytoplasm. It carries out the reaction ATP-dependent breakage, passage and rejoining of double-stranded DNA.. A type II topoisomerase that negatively supercoils closed circular double-stranded (ds) DNA in an ATP-dependent manner to modulate DNA topology and maintain chromosomes in an underwound state. Negative supercoiling favors strand separation, and DNA replication, transcription, recombination and repair, all of which involve strand separation. Also able to catalyze the interconversion of other topological isomers of dsDNA rings, including catenanes and knotted rings. Type II topoisomerases break and join 2 DNA strands simultaneously in an ATP-dependent manner. This Metamycoplasma arthritidis (strain 158L3-1) (Mycoplasma arthritidis) protein is DNA gyrase subunit A.